A 634-amino-acid polypeptide reads, in one-letter code: Chaperone protein HtpG (634 aa).

The tract at residues 1–344 (MSETVSHNKE…SNDLPLNVSR (344 aa)) is a; substrate-binding. The tract at residues 345–561 (EILQDNKVTQ…DFEMGTQMAK (217 aa)) is b. The interval 562–634 (LLEAAGQAVP…GAINKLLTKV (73 aa)) is c.

Belongs to the heat shock protein 90 family. Homodimer.

The protein resides in the cytoplasm. Its function is as follows. Molecular chaperone. Has ATPase activity. The protein is Chaperone protein HtpG of Vibrio campbellii (strain ATCC BAA-1116).